Here is an 80-residue protein sequence, read N- to C-terminus: Acyl carrier protein (80 aa).

Residues 4-79 enclose the Carrier domain; the sequence is EEIKDKVFDI…QAIDYIVNAK (76 aa). Serine 39 bears the O-(pantetheine 4'-phosphoryl)serine mark.

Belongs to the acyl carrier protein (ACP) family. 4'-phosphopantetheine is transferred from CoA to a specific serine of apo-ACP by AcpS. This modification is essential for activity because fatty acids are bound in thioester linkage to the sulfhydryl of the prosthetic group.

It is found in the cytoplasm. It participates in lipid metabolism; fatty acid biosynthesis. In terms of biological role, carrier of the growing fatty acid chain in fatty acid biosynthesis. This chain is Acyl carrier protein, found in Prosthecochloris aestuarii (strain DSM 271 / SK 413).